Here is a 502-residue protein sequence, read N- to C-terminus: Dynein regulatory complex subunit 2 (502 aa).

Coiled coils occupy residues 96–160 (DSVI…RKAI) and 252–285 (EKSS…HSRE).

It belongs to the DRC2 family. Component of the nexin-dynein regulatory complex (N-DRC). Interacts with DRC1.

It is found in the cytoplasm. It localises to the cytoskeleton. The protein localises to the flagellum basal body. The protein resides in the cell projection. Its subcellular location is the cilium. It is found in the flagellum. It localises to the flagellum axoneme. Its function is as follows. Component of the nexin-dynein regulatory complex (N-DRC), a key regulator of ciliary/flagellar motility which maintains the alignment and integrity of the distal axoneme and regulates microtubule sliding in motile axonemes. Plays a critical role in the assembly of N-DRC and also stabilizes the assembly of multiple inner dynein arms and radial spokes. Coassembles with DRC1 to form a central scaffold needed for assembly of the N-DRC and its attachment to the outer doublet microtubules. In Rattus norvegicus (Rat), this protein is Dynein regulatory complex subunit 2 (Ccdc65).